The sequence spans 483 residues: Rhamnulokinase (483 aa).

11-15 contributes to the ATP binding site; that stretch reads ASSGR. Substrate-binding positions include Gly-79 and 234 to 236; that span reads HDT. Asp-235 functions as the Proton acceptor in the catalytic mechanism. An ATP-binding site is contributed by Thr-257. Asn-294 lines the substrate pocket. Gln-302 contributes to the ATP binding site. A disulfide bond links Cys-352 and Cys-369. Gly-401 contacts ATP.

The protein belongs to the rhamnulokinase family. Requires Mg(2+) as cofactor.

It catalyses the reaction L-rhamnulose + ATP = L-rhamnulose 1-phosphate + ADP + H(+). The protein operates within carbohydrate degradation; L-rhamnose degradation; glycerone phosphate from L-rhamnose: step 2/3. Involved in the catabolism of L-rhamnose (6-deoxy-L-mannose). Catalyzes the transfer of the gamma-phosphate group from ATP to the 1-hydroxyl group of L-rhamnulose to yield L-rhamnulose 1-phosphate. The sequence is that of Rhamnulokinase from Listeria monocytogenes serovar 1/2a (strain ATCC BAA-679 / EGD-e).